The following is a 991-amino-acid chain: Ribonuclease TUDOR 1 (991 aa).

Residue alanine 2 is modified to N-acetylalanine. TNase-like domains lie at 8-151, 186-364, 378-557, and 587-714; these read QWLK…RWSK, KPME…MWAN, QNFT…IHSA, and RRIP…IWEN. Positions 227–250 are disordered; sequence RTTNGSVVETVPDEPNGDVSAESR. Residues 782–847 form the Tudor domain; sequence NPKRGDIVLA…RPIDPSVSAA (66 aa). Position 970 is a phosphotyrosine (tyrosine 970). A disordered region spans residues 971–991; sequence GDIESDDEDTGPARKPAGGRR. Serine 975 is modified (phosphoserine). The residue at position 980 (threonine 980) is a Phosphothreonine.

In terms of tissue distribution, expressed in seeds, leaves, flowers, roots and siliques (at protein level). Accumulates in the cap and elongation zone of the root apices (at protein level).

It localises to the cytoplasm. The protein resides in the cytoplasmic granule. It is found in the perinuclear region. Its subcellular location is the endoplasmic reticulum. With respect to regulation, repressed by the specific inhibitor 3',5'-deoxythymidine bisphosphate (pdTp); this RNase activity inhibition impairs subcellular relocation upon abiotic stress and leads to reduced stress resistance. Its function is as follows. Cytoprotective ribonuclease (RNase) required for resistance to abiotic stresses, acting as a positive regulator of mRNA decapping during stress. Essential for the integrity and function of cytoplasmic messenger ribonucleoprotein (mRNP) complexes called stress granules (SGs) and processing bodies (PBs), sites of post-transcriptional gene regulation during stress (e.g. salt and heat). Involved in gibberellic acid (GA) biosynthesis. Essential for stress tolerance, probably by regulating mRNAs entering the secretory pathway. Component of stress granules (SGs) that regulates growth under salt stress by modulating levels of GA20OX3 mRNA. Binds GA20OX3 mRNA. May inhibit the degradation of mRNAs involved in stress adaptation. This Arabidopsis thaliana (Mouse-ear cress) protein is Ribonuclease TUDOR 1.